The following is a 479-amino-acid chain: Anaerobic nitric oxide reductase flavorubredoxin (479 aa).

The interval 30-210 (LRGSSYNSYL…PFSRLVTPKI (181 aa)) is zinc metallo-hydrolase. The Fe cation site is built by histidine 79, glutamate 81, aspartate 83, histidine 147, aspartate 166, and histidine 227. The Flavodoxin-like domain maps to 254–393 (ITIFYDTMSN…LCREHGREIA (140 aa)). FMN contacts are provided by residues 260-264 (TMSNN) and 342-369 (AFGS…EMSL). The 57-residue stretch at 423–479 (GPRMQCSVCQWIYDPAKGEPMQDVAPGTPWSEVPDNFLCPECSLGKDVFEELASEAK) folds into the Rubredoxin-like domain. The Fe cation site is built by cysteine 428, cysteine 431, cysteine 461, and cysteine 464.

This sequence in the N-terminal section; belongs to the zinc metallo-hydrolase group 3 family. Homotetramer. Requires Fe cation as cofactor. FMN serves as cofactor.

Its subcellular location is the cytoplasm. It participates in nitrogen metabolism; nitric oxide reduction. Its function is as follows. Anaerobic nitric oxide reductase; uses NADH to detoxify nitric oxide (NO), protecting several 4Fe-4S NO-sensitive enzymes. Has at least 2 reductase partners, only one of which (NorW, flavorubredoxin reductase) has been identified. NO probably binds to the di-iron center; electrons enter from the reductase at rubredoxin and are transferred sequentially to the FMN center and the di-iron center. Also able to function as an aerobic oxygen reductase. This is Anaerobic nitric oxide reductase flavorubredoxin (norV) from Escherichia coli (strain K12 / DH10B).